We begin with the raw amino-acid sequence, 438 residues long: Ribosomal protein uS12 methylthiotransferase RimO (438 aa).

An MTTase N-terminal domain is found at 5–116 (PTIAISHLGC…IVQVIQRVEN (112 aa)). [4Fe-4S] cluster contacts are provided by Cys-14, Cys-50, Cys-79, Cys-154, Cys-158, and Cys-161. The 230-residue stretch at 140–369 (TTSEGVAYLR…MQIQQPISLQ (230 aa)) folds into the Radical SAM core domain. Positions 372-438 (CACIGDIVDV…IYDLYGEVIN (67 aa)) constitute a TRAM domain.

The protein belongs to the methylthiotransferase family. RimO subfamily. [4Fe-4S] cluster is required as a cofactor.

It localises to the cytoplasm. It catalyses the reaction L-aspartate(89)-[ribosomal protein uS12]-hydrogen + (sulfur carrier)-SH + AH2 + 2 S-adenosyl-L-methionine = 3-methylsulfanyl-L-aspartate(89)-[ribosomal protein uS12]-hydrogen + (sulfur carrier)-H + 5'-deoxyadenosine + L-methionine + A + S-adenosyl-L-homocysteine + 2 H(+). Functionally, catalyzes the methylthiolation of an aspartic acid residue of ribosomal protein uS12. The polypeptide is Ribosomal protein uS12 methylthiotransferase RimO (Gloeothece citriformis (strain PCC 7424) (Cyanothece sp. (strain PCC 7424))).